We begin with the raw amino-acid sequence, 1064 residues long: MARAMSETAEPGARTGAADTTVAPTGASGGIIPAAAGTAGGAPAGTGSVEPSFRYDARLAADIERRWQRRWADEGTFNSPNPVGPLSTGFEKVAGREPFYIMDMFPYPSGSGLHVGHPLGYIGTDVFARYLRMSGRHVLHPFGYDSFGLPAEQYAINTGQHPRDTTNANIANMRRQLSRLGLGHDTRREIATTDVGYYRWTQWIFQQIFNSWYDPQAGRARPIAELIEEFAAGTRAPVAGPAGGNTAVSVDAVRAANPAGLAWTELDEVSRRKVVNAHRLAYISEQLVNWCPGLGTVLANEEVTADGRSDIGNYPVFRRPLKQWILRITAYAERLISDLDLVDWPDSIKQMQRNWISPSEGASVEFTVVAPGEEAGASDPSGSSTARRIEVYTTRPDTLAGATFLVLAPEHPLADALIADTWPADTPVSWRFPAGRPGGGTEPADTAGPEAGADPAWTPRAAVDAYREFAAHRSDRQRGEEVIDRTGVFTGSYVRNPVGGGVIPVFLADYVLLGYGTGAIMAVPAHDSRDFSFARAFDLPIPAVLEPDADWYAAHGVVPATPSAQWPEAFSGAGEYRPGPASAPVLVGLSKSEAIKATVHWLEEIGAGRSARSYRLRDWLFSRQRYWGEPFPIVFDVDGLPHAVPDELLPIELPEMTDFRPTAMAEDDASDPVPPLARVADWVTVTLDLGDGPKQYRRETNTMPQWAGSCWYYLRYLDPTNTERFVDPTVERYWMARPGAVPGDGGVDLYVGGVEHAVLHLLYARFWHKVLYDLGHVSTKEPFKRLFNQGYIQADAFTDARGMYVPAAEVTATPDGRFLFQGAPVNRRSGKMGKSLKNSVSPDEMYDRFGADTLRVYEMAMGPLDADRPWHTDDIVGSHRFLQRLWRTVVDETTGAAAVVDEPLDDEALRVLHRTILTVTAEYAGLRFNTAVARLIELTNFVSKSYGKSPTPRALAEPLTLMAAPLAPHIAEELWSRLGHEESVSTVAFPIGDPALAAESVRTIPVQVNGKVRFTIEVPDGSAEQTVRDLLAAHPEFARQTDGRTIKKIIVVPGRIVNIAISPA.

The segment at 1–25 (MARAMSETAEPGARTGAADTTVAPT) is disordered. Positions 106–117 (PYPSGSGLHVGH) match the 'HIGH' region motif. The interval 435–456 (GRPGGGTEPADTAGPEAGADPA) is disordered. A 'KMSKS' region motif is present at residues 831-835 (KMGKS). Position 834 (lysine 834) interacts with ATP.

The protein belongs to the class-I aminoacyl-tRNA synthetase family.

Its subcellular location is the cytoplasm. It carries out the reaction tRNA(Leu) + L-leucine + ATP = L-leucyl-tRNA(Leu) + AMP + diphosphate. The protein is Leucine--tRNA ligase of Frankia casuarinae (strain DSM 45818 / CECT 9043 / HFP020203 / CcI3).